Consider the following 306-residue polypeptide: Tryptophan 2,3-dioxygenase (306 aa).

Residues 75-79, Tyr137, and Arg141 contribute to the substrate site; that span reads FIIQH. His264 provides a ligand contact to heme. Thr278 contributes to the substrate binding site.

This sequence belongs to the tryptophan 2,3-dioxygenase family. Homotetramer. The cofactor is heme.

The catalysed reaction is L-tryptophan + O2 = N-formyl-L-kynurenine. It participates in amino-acid degradation; L-tryptophan degradation via kynurenine pathway; L-kynurenine from L-tryptophan: step 1/2. In terms of biological role, heme-dependent dioxygenase that catalyzes the oxidative cleavage of the L-tryptophan (L-Trp) pyrrole ring and converts L-tryptophan to N-formyl-L-kynurenine. Catalyzes the oxidative cleavage of the indole moiety. The polypeptide is Tryptophan 2,3-dioxygenase (Paraburkholderia phytofirmans (strain DSM 17436 / LMG 22146 / PsJN) (Burkholderia phytofirmans)).